The primary structure comprises 430 residues: Neuropeptide FF receptor 1 (430 aa).

The disordered stretch occupies residues 1–20 (MEGEPSQPPNSSWPLSQNGT). Residues 1-43 (MEGEPSQPPNSSWPLSQNGTNTEATPATNLTFSSYYQHTSPVA) lie on the Extracellular side of the membrane. A compositionally biased stretch (polar residues) spans 9 to 20 (PNSSWPLSQNGT). N-linked (GlcNAc...) asparagine glycosylation is found at Asn10, Asn18, and Asn29. The helical transmembrane segment at 44–64 (AMFIVAYALIFLLCMVGNTLV) threads the bilayer. Residues 65-80 (CFIVLKNRHMHTVTNM) lie on the Cytoplasmic side of the membrane. A helical membrane pass occupies residues 81 to 101 (FILNLAVSDLLVGIFCMPTTL). The Extracellular portion of the chain corresponds to 102 to 117 (VDNLITGWPFDNATCK). N-linked (GlcNAc...) asparagine glycosylation is present at Asn113. Cys116 and Cys203 are joined by a disulfide. The chain crosses the membrane as a helical span at residues 118 to 138 (MSGLVQGMSVSASVFTLVAIA). The Cytoplasmic segment spans residues 139 to 158 (VERFRCIVHPFREKLTLRKA). Residues 159 to 179 (LVTIAVIWALALLIMCPSAVT) traverse the membrane as a helical segment. Over 180 to 214 (LTVTREEHHFMVDARNRSYPLYSCWEAWPEKGMRR) the chain is Extracellular. N-linked (GlcNAc...) asparagine glycosylation occurs at Asn195. Residues 215–235 (VYTTVLFSHIYLAPLALIVVM) form a helical membrane-spanning segment. At 236–271 (YARIARKLCQAPGPAPGGEEAADPRASRRRARVVHM) the chain is on the cytoplasmic side. The helical transmembrane segment at 272 to 292 (LVMVALFFTLSWLPLWALLLL) threads the bilayer. At 293–307 (IDYGQLSAPQLHLVT) the chain is on the extracellular side. Residues 308–328 (VYAFPFAHWLAFFNSSANPII) form a helical membrane-spanning segment. Residues 329 to 430 (YGYFNENFRR…LPLTIPAWDI (102 aa)) are Cytoplasmic-facing. The segment covering 379 to 404 (SDSGLPSESGPSSGAPRPGRLPLRNG) has biased composition (low complexity). A disordered region spans residues 379-413 (SDSGLPSESGPSSGAPRPGRLPLRNGRVAHHGLPR).

The protein belongs to the G-protein coupled receptor 1 family.

Its subcellular location is the cell membrane. Its function is as follows. Receptor for NPAF (A-18-F-amide) and NPFF (F-8-F-amide) neuropeptides, also known as morphine-modulating peptides. Can also be activated by a variety of naturally occurring or synthetic FMRF-amide like ligands. This receptor mediates its action by association with G proteins that activate a phosphatidylinositol-calcium second messenger system. The polypeptide is Neuropeptide FF receptor 1 (Homo sapiens (Human)).